The chain runs to 178 residues: Disulfide bond formation protein B (178 aa).

Topologically, residues 1 to 16 (MTIFSSLNQFSKGHVS) are cytoplasmic. The helical transmembrane segment at 17–33 (WLLLLLFIIFFEACALY) threads the bilayer. Residues 34-51 (FQHVMMLAPCVMCIYERV) are Periplasmic-facing. A disulfide bridge links cysteine 43 with cysteine 46. The chain crosses the membrane as a helical span at residues 52–67 (AMMGIGGAAIIGLIAP). Topologically, residues 68–74 (NNALFRW) are cytoplasmic. Residues 75 to 92 (LGLIGWGLSSYKGLMLAM) traverse the membrane as a helical segment. Residues 93-147 (QHVDYQFNPSPFATCDLFVTFPSWAPLNQWVPWMFEAYGDCSKIVWQFFDLSMPQ) are Periplasmic-facing. Cysteine 107 and cysteine 133 are oxidised to a cystine. Residues 148–166 (WLVVIFAGNLVALALIVIA) form a helical membrane-spanning segment. The Cytoplasmic portion of the chain corresponds to 167–178 (QFFPVKRKNPIR).

This sequence belongs to the DsbB family.

The protein localises to the cell inner membrane. Its function is as follows. Required for disulfide bond formation in some periplasmic proteins. Acts by oxidizing the DsbA protein. The chain is Disulfide bond formation protein B from Vibrio parahaemolyticus serotype O3:K6 (strain RIMD 2210633).